The sequence spans 363 residues: Jasmonate-induced oxygenase 3 (363 aa).

The Fe2OG dioxygenase domain maps to 210–312 (ESGGCLRVNY…RLSLAFFYNP (103 aa)). Residue R216 coordinates jasmonate. 2 residues coordinate 2-oxoglutarate: N218 and Y220. Positions 235, 237, and 293 each coordinate Fe cation. Positions 303 and 305 each coordinate 2-oxoglutarate. Positions 342 and 346 each coordinate jasmonate.

The protein belongs to the iron/ascorbate-dependent oxidoreductase family. L-ascorbate serves as cofactor. It depends on Fe(2+) as a cofactor.

The enzyme catalyses jasmonate + 2-oxoglutarate + O2 = (1R,2R)-12-hydroxyjasmonate + succinate + CO2. 2-oxoglutarate-dependent dioxygenase involved in the oxidation of jasmonate (JA), a stress-induced phytohormone synthesized in response to attack by pathogens and herbivores, which triggers the activation of defense responses via the JA-mediated signaling pathway. Converts JA to 12-hydroxyjasmonate (12OH-JA), an inactive form of JA. Is specific to free JA, and cannot oxidize the bioactive form jasmonoyl-L-isoleucine (JA-Ile) or other JA-amino acid conjugates. Prevents over-accumulation of JA and indirectly its bioactive form JA-Ile under stress response. Acts as a negative regulator of JA-mediated defense signaling, by contributing to 12OH-JA accumulation, which represses JA defense responses upon infection by the fungal pathogen Botrytis cinerea. Acts as a negative regulator of JA-mediated defense responses upon infestation by the herbivorous caterpillar Mamestra brassicae. This Arabidopsis thaliana (Mouse-ear cress) protein is Jasmonate-induced oxygenase 3.